The chain runs to 162 residues: Large ribosomal subunit protein uL15 (162 aa).

Residues 1–18 (MKLNEIRDNEGATKDRMR) are compositionally biased toward basic and acidic residues. Residues 1 to 42 (MKLNEIRDNEGATKDRMRVGRGIGSGKGKTAGRGVKGQKART) are disordered. Positions 21–35 (RGIGSGKGKTAGRGV) are enriched in gly residues.

It belongs to the universal ribosomal protein uL15 family. Part of the 50S ribosomal subunit.

Its function is as follows. Binds to the 23S rRNA. The protein is Large ribosomal subunit protein uL15 of Methylobacterium sp. (strain 4-46).